We begin with the raw amino-acid sequence, 45 residues long: MTKRTLGGTSRKRKRVSGFRVRMRTHTGRRVIRARRKKGRSQLAV.

Residues 1–27 (MTKRTLGGTSRKRKRVSGFRVRMRTHT) are disordered. The span at 10–27 (SRKRKRVSGFRVRMRTHT) shows a compositional bias: basic residues.

This sequence belongs to the bacterial ribosomal protein bL34 family.

The sequence is that of Large ribosomal subunit protein bL34 from Prochlorococcus marinus (strain MIT 9211).